The sequence spans 461 residues: MEKKASILMNRYELGRMLGQGTFAKVYHARNLASNQSVAIKVIDKEKVLRVGMIDQIKREISIMRLVRHPNIVQLHEVMASKSKIYFAMEYVRGGELFSRVARGRLKEDAARKYFQQLIGAVDFCHSRGVYHRDLKPENLLVDENGNLKVSDFGLSAFKECQKQDGLLHTTCGTPAYVAPEIINKRGYDGAKADIWSCGVILFVLLAGYLPFHDSNLMEMYRKISKGDVKFPQWFTTDVRRLLSRLLDPNPNIRITVEKLVEHPWFKKGYKPAVMLSQPNESNNLKDVHTAFSADHKDNEGKAKEPASSLKPVSLNAFDIISLSKGFDLSGLFENDKEQKADSRFMTQKPASAIVSKLEQIAETESFKVKKQDGLVKLQGSKEGRKGQLAIDAEIFEVTPSFFVVEVKKSAGDTLEYEKFCNKGLRPSLRDICWDGQSEHPSLAQSSTLTQSSKSISRHAI.

The 255-residue stretch at 12-266 (YELGRMLGQG…VEKLVEHPWF (255 aa)) folds into the Protein kinase domain. ATP-binding positions include 18-26 (LGQGTFAKV) and K41. Catalysis depends on D134, which acts as the Proton acceptor. The segment at 152-181 (DFGLSAFKECQKQDGLLHTTCGTPAYVAPE) is activation loop. The 35-residue stretch at 300-334 (EGKAKEPASSLKPVSLNAFDIISLSKGFDLSGLFE) folds into the NAF domain. A PPI region spans residues 340–369 (KADSRFMTQKPASAIVSKLEQIAETESFKV). A disordered region spans residues 440 to 461 (HPSLAQSSTLTQSSKSISRHAI). The span at 442–455 (SLAQSSTLTQSSKS) shows a compositional bias: low complexity.

The protein belongs to the protein kinase superfamily. CAMK Ser/Thr protein kinase family. SNF1 subfamily. Requires Mn(2+) as cofactor.

The enzyme catalyses L-seryl-[protein] + ATP = O-phospho-L-seryl-[protein] + ADP + H(+). The catalysed reaction is L-threonyl-[protein] + ATP = O-phospho-L-threonyl-[protein] + ADP + H(+). Its function is as follows. CIPK serine-threonine protein kinases interact with CBL proteins. Binding of a CBL protein to the regulatory NAF domain of CIPK protein lead to the activation of the kinase in a calcium-dependent manner. The protein is CBL-interacting protein kinase 5 (CIPK5) of Oryza sativa subsp. japonica (Rice).